A 789-amino-acid chain; its full sequence is Probable phosphoketolase 1 (789 aa).

Belongs to the XFP family. Requires thiamine diphosphate as cofactor.

This Rhizobium meliloti (strain 1021) (Ensifer meliloti) protein is Probable phosphoketolase 1.